The sequence spans 401 residues: Nicotinate phosphoribosyltransferase (401 aa).

The residue at position 221 (histidine 221) is a Phosphohistidine; by autocatalysis.

Belongs to the NAPRTase family. In terms of processing, transiently phosphorylated on a His residue during the reaction cycle. Phosphorylation strongly increases the affinity for substrates and increases the rate of nicotinate D-ribonucleotide production. Dephosphorylation regenerates the low-affinity form of the enzyme, leading to product release.

The catalysed reaction is nicotinate + 5-phospho-alpha-D-ribose 1-diphosphate + ATP + H2O = nicotinate beta-D-ribonucleotide + ADP + phosphate + diphosphate. The protein operates within cofactor biosynthesis; NAD(+) biosynthesis; nicotinate D-ribonucleotide from nicotinate: step 1/1. Catalyzes the synthesis of beta-nicotinate D-ribonucleotide from nicotinate and 5-phospho-D-ribose 1-phosphate at the expense of ATP. In Edwardsiella ictaluri (strain 93-146), this protein is Nicotinate phosphoribosyltransferase.